Consider the following 288-residue polypeptide: Diaminopimelate epimerase (288 aa).

2 residues coordinate substrate: Asn14 and Asn67. Residue Cys76 is the Proton donor of the active site. Substrate contacts are provided by residues 77–78, Asn166, Asn199, and 217–218; these read GN and ER. The Proton acceptor role is filled by Cys226. 227-228 contributes to the substrate binding site; it reads GT.

This sequence belongs to the diaminopimelate epimerase family. Homodimer.

It is found in the cytoplasm. The catalysed reaction is (2S,6S)-2,6-diaminopimelate = meso-2,6-diaminopimelate. Its pathway is amino-acid biosynthesis; L-lysine biosynthesis via DAP pathway; DL-2,6-diaminopimelate from LL-2,6-diaminopimelate: step 1/1. Catalyzes the stereoinversion of LL-2,6-diaminopimelate (L,L-DAP) to meso-diaminopimelate (meso-DAP), a precursor of L-lysine and an essential component of the bacterial peptidoglycan. The polypeptide is Diaminopimelate epimerase (Bacillus cereus (strain ATCC 14579 / DSM 31 / CCUG 7414 / JCM 2152 / NBRC 15305 / NCIMB 9373 / NCTC 2599 / NRRL B-3711)).